The following is a 108-amino-acid chain: DNA-binding protein HBbu (108 aa).

It belongs to the bacterial histone-like protein family.

In terms of biological role, histone-like DNA-binding protein which is capable of wrapping DNA to stabilize it, and thus to prevent its denaturation under extreme environmental conditions. This Borrelia parkeri protein is DNA-binding protein HBbu (hbb).